A 70-amino-acid polypeptide reads, in one-letter code: Insulin (70 aa).

3 disulfide bridges follow: Cys-7/Cys-56, Cys-19/Cys-69, and Cys-55/Cys-60. Positions 33–49 (FVDSLAGYSKHQNGGIS) are cleaved as a propeptide — c peptide.

The protein belongs to the insulin family. Heterodimer of a B chain and an A chain linked by two disulfide bonds.

The protein localises to the secreted. Its function is as follows. Insulin decreases blood glucose concentration. It increases cell permeability to monosaccharides, amino acids and fatty acids. It accelerates glycolysis, the pentose phosphate cycle, and glycogen synthesis in liver. This Torpedo marmorata (Marbled electric ray) protein is Insulin (ins).